Reading from the N-terminus, the 75-residue chain is Putative DNA-directed RNA polymerase subunit omega (75 aa).

Belongs to the RNA polymerase subunit omega family.

The protein localises to the plastid. Its subcellular location is the chloroplast. The catalysed reaction is RNA(n) + a ribonucleoside 5'-triphosphate = RNA(n+1) + diphosphate. In terms of biological role, may be involved in RNA polymerase activity. The sequence is that of Putative DNA-directed RNA polymerase subunit omega (rpoZ) from Porphyra purpurea (Red seaweed).